We begin with the raw amino-acid sequence, 355 residues long: S-adenosylmethionine:tRNA ribosyltransferase-isomerase (355 aa).

This sequence belongs to the QueA family. Monomer.

The protein resides in the cytoplasm. The enzyme catalyses 7-aminomethyl-7-carbaguanosine(34) in tRNA + S-adenosyl-L-methionine = epoxyqueuosine(34) in tRNA + adenine + L-methionine + 2 H(+). It participates in tRNA modification; tRNA-queuosine biosynthesis. Functionally, transfers and isomerizes the ribose moiety from AdoMet to the 7-aminomethyl group of 7-deazaguanine (preQ1-tRNA) to give epoxyqueuosine (oQ-tRNA). This chain is S-adenosylmethionine:tRNA ribosyltransferase-isomerase, found in Burkholderia ambifaria (strain MC40-6).